A 225-amino-acid chain; its full sequence is Germin-like protein 8-7 (225 aa).

An N-terminal signal peptide occupies residues 1–23; the sequence is MASPSSFCLLAVLLALVSWQAIA. An intrachain disulfide couples C33 to C48. Positions 63–213 constitute a Cupin type-1 domain; sequence AMLDTPRKTN…AFQVEKGTID (151 aa). N77 is a glycosylation site (N-linked (GlcNAc...) asparagine). H110, H112, and E117 together coordinate Mn(2+). N-linked (GlcNAc...) asparagine glycosylation occurs at N136. H158 contacts Mn(2+).

This sequence belongs to the germin family. In terms of assembly, oligomer (believed to be a pentamer but probably hexamer).

The protein localises to the secreted. The protein resides in the extracellular space. Its subcellular location is the apoplast. Its function is as follows. Plays a role in broad-spectrum disease resistance. Probably has no oxalate oxidase activity even if the active site is conserved. The polypeptide is Germin-like protein 8-7 (GER6) (Oryza sativa subsp. japonica (Rice)).